A 403-amino-acid polypeptide reads, in one-letter code: Phosphopentomutase (403 aa).

Mn(2+)-binding residues include aspartate 13, aspartate 298, histidine 303, aspartate 339, histidine 340, and histidine 351.

It belongs to the phosphopentomutase family. Mn(2+) serves as cofactor.

It localises to the cytoplasm. The enzyme catalyses 2-deoxy-alpha-D-ribose 1-phosphate = 2-deoxy-D-ribose 5-phosphate. It carries out the reaction alpha-D-ribose 1-phosphate = D-ribose 5-phosphate. The protein operates within carbohydrate degradation; 2-deoxy-D-ribose 1-phosphate degradation; D-glyceraldehyde 3-phosphate and acetaldehyde from 2-deoxy-alpha-D-ribose 1-phosphate: step 1/2. Functionally, isomerase that catalyzes the conversion of deoxy-ribose 1-phosphate (dRib-1-P) and ribose 1-phosphate (Rib-1-P) to deoxy-ribose 5-phosphate (dRib-5-P) and ribose 5-phosphate (Rib-5-P), respectively. The protein is Phosphopentomutase of Streptococcus pyogenes serotype M3 (strain ATCC BAA-595 / MGAS315).